Consider the following 79-residue polypeptide: ATP synthase subunit c (79 aa).

2 helical membrane-spanning segments follow: residues 11-31 and 53-73; these read MAAAVMMGLAAIGAAIGIGIL and FFIVMGLVDAIPMIAVGLGLY.

Belongs to the ATPase C chain family. F-type ATPases have 2 components, F(1) - the catalytic core - and F(0) - the membrane proton channel. F(1) has five subunits: alpha(3), beta(3), gamma(1), delta(1), epsilon(1). F(0) has three main subunits: a(1), b(2) and c(10-14). The alpha and beta chains form an alternating ring which encloses part of the gamma chain. F(1) is attached to F(0) by a central stalk formed by the gamma and epsilon chains, while a peripheral stalk is formed by the delta and b chains.

Its subcellular location is the cell inner membrane. F(1)F(0) ATP synthase produces ATP from ADP in the presence of a proton or sodium gradient. F-type ATPases consist of two structural domains, F(1) containing the extramembraneous catalytic core and F(0) containing the membrane proton channel, linked together by a central stalk and a peripheral stalk. During catalysis, ATP synthesis in the catalytic domain of F(1) is coupled via a rotary mechanism of the central stalk subunits to proton translocation. Functionally, key component of the F(0) channel; it plays a direct role in translocation across the membrane. A homomeric c-ring of between 10-14 subunits forms the central stalk rotor element with the F(1) delta and epsilon subunits. This is ATP synthase subunit c from Citrobacter koseri (strain ATCC BAA-895 / CDC 4225-83 / SGSC4696).